Consider the following 505-residue polypeptide: Lysine--tRNA ligase (505 aa).

2 residues coordinate Mg(2+): Glu-415 and Glu-422.

Belongs to the class-II aminoacyl-tRNA synthetase family. As to quaternary structure, homodimer. It depends on Mg(2+) as a cofactor.

The protein localises to the cytoplasm. It carries out the reaction tRNA(Lys) + L-lysine + ATP = L-lysyl-tRNA(Lys) + AMP + diphosphate. This is Lysine--tRNA ligase from Salmonella typhi.